The sequence spans 277 residues: NADPH-dependent 7-cyano-7-deazaguanine reductase (277 aa).

83-85 (IES) serves as a coordination point for substrate. 85–86 (SK) lines the NADPH pocket. The active-site Thioimide intermediate is the cysteine 184. Aspartate 191 serves as the catalytic Proton donor. Substrate is bound at residue 223-224 (HE). 252–253 (RG) lines the NADPH pocket.

It belongs to the GTP cyclohydrolase I family. QueF type 2 subfamily. As to quaternary structure, homodimer.

Its subcellular location is the cytoplasm. The catalysed reaction is 7-aminomethyl-7-carbaguanine + 2 NADP(+) = 7-cyano-7-deazaguanine + 2 NADPH + 3 H(+). The protein operates within tRNA modification; tRNA-queuosine biosynthesis. Its function is as follows. Catalyzes the NADPH-dependent reduction of 7-cyano-7-deazaguanine (preQ0) to 7-aminomethyl-7-deazaguanine (preQ1). The sequence is that of NADPH-dependent 7-cyano-7-deazaguanine reductase from Cupriavidus pinatubonensis (strain JMP 134 / LMG 1197) (Cupriavidus necator (strain JMP 134)).